The primary structure comprises 134 residues: Aspartate 1-decarboxylase (134 aa).

S25 serves as the catalytic Schiff-base intermediate with substrate; via pyruvic acid. At S25 the chain carries Pyruvic acid (Ser). Substrate is bound at residue T57. Catalysis depends on Y58, which acts as the Proton donor. Position 73–75 (73–75) interacts with substrate; the sequence is GAA.

The protein belongs to the PanD family. As to quaternary structure, heterooctamer of four alpha and four beta subunits. Pyruvate is required as a cofactor. In terms of processing, is synthesized initially as an inactive proenzyme, which is activated by self-cleavage at a specific serine bond to produce a beta-subunit with a hydroxyl group at its C-terminus and an alpha-subunit with a pyruvoyl group at its N-terminus.

It is found in the cytoplasm. It catalyses the reaction L-aspartate + H(+) = beta-alanine + CO2. It participates in cofactor biosynthesis; (R)-pantothenate biosynthesis; beta-alanine from L-aspartate: step 1/1. Functionally, catalyzes the pyruvoyl-dependent decarboxylation of aspartate to produce beta-alanine. The polypeptide is Aspartate 1-decarboxylase (Mycolicibacterium gilvum (strain PYR-GCK) (Mycobacterium gilvum (strain PYR-GCK))).